A 122-amino-acid chain; its full sequence is Ribosome-binding factor A (122 aa).

The protein belongs to the RbfA family. Monomer. Binds 30S ribosomal subunits, but not 50S ribosomal subunits or 70S ribosomes.

It localises to the cytoplasm. In terms of biological role, one of several proteins that assist in the late maturation steps of the functional core of the 30S ribosomal subunit. Associates with free 30S ribosomal subunits (but not with 30S subunits that are part of 70S ribosomes or polysomes). Required for efficient processing of 16S rRNA. May interact with the 5'-terminal helix region of 16S rRNA. The protein is Ribosome-binding factor A of Pelobacter propionicus (strain DSM 2379 / NBRC 103807 / OttBd1).